Reading from the N-terminus, the 314-residue chain is Methionyl-tRNA formyltransferase (314 aa).

113–116 (SLLP) is a (6S)-5,6,7,8-tetrahydrofolate binding site.

The protein belongs to the Fmt family.

It catalyses the reaction L-methionyl-tRNA(fMet) + (6R)-10-formyltetrahydrofolate = N-formyl-L-methionyl-tRNA(fMet) + (6S)-5,6,7,8-tetrahydrofolate + H(+). Functionally, attaches a formyl group to the free amino group of methionyl-tRNA(fMet). The formyl group appears to play a dual role in the initiator identity of N-formylmethionyl-tRNA by promoting its recognition by IF2 and preventing the misappropriation of this tRNA by the elongation apparatus. The protein is Methionyl-tRNA formyltransferase of Ectopseudomonas mendocina (strain ymp) (Pseudomonas mendocina).